The sequence spans 383 residues: UDP-N-acetylglucosamine--N-acetylmuramyl-(pentapeptide) pyrophosphoryl-undecaprenol N-acetylglucosamine transferase (383 aa).

Residues 10–12 (TGG), Asn124, Arg165, Ser190, Ile245, and Gln290 contribute to the UDP-N-acetyl-alpha-D-glucosamine site. The tract at residues 364 to 383 (PFGQAREPGQKPARPPDLAS) is disordered.

It belongs to the glycosyltransferase 28 family. MurG subfamily.

It localises to the cell inner membrane. It catalyses the reaction di-trans,octa-cis-undecaprenyl diphospho-N-acetyl-alpha-D-muramoyl-L-alanyl-D-glutamyl-meso-2,6-diaminopimeloyl-D-alanyl-D-alanine + UDP-N-acetyl-alpha-D-glucosamine = di-trans,octa-cis-undecaprenyl diphospho-[N-acetyl-alpha-D-glucosaminyl-(1-&gt;4)]-N-acetyl-alpha-D-muramoyl-L-alanyl-D-glutamyl-meso-2,6-diaminopimeloyl-D-alanyl-D-alanine + UDP + H(+). It participates in cell wall biogenesis; peptidoglycan biosynthesis. Functionally, cell wall formation. Catalyzes the transfer of a GlcNAc subunit on undecaprenyl-pyrophosphoryl-MurNAc-pentapeptide (lipid intermediate I) to form undecaprenyl-pyrophosphoryl-MurNAc-(pentapeptide)GlcNAc (lipid intermediate II). In Anaeromyxobacter dehalogenans (strain 2CP-C), this protein is UDP-N-acetylglucosamine--N-acetylmuramyl-(pentapeptide) pyrophosphoryl-undecaprenol N-acetylglucosamine transferase.